Reading from the N-terminus, the 401-residue chain is G2/mitotic-specific cyclin-B1 (401 aa).

Disordered regions lie at residues 1 to 30 (MALRVTRNRLASTRAEQGGKTCSVSGPTLK) and 84 to 103 (KVQVPAQPEPASPTPMETSG). The span at 9–26 (RLASTRAEQGGKTCSVSG) shows a compositional bias: polar residues.

The protein belongs to the cyclin family. Cyclin AB subfamily. Interacts with the CDK1 protein kinase to form a serine/threonine kinase holoenzyme complex also known as maturation promoting factor (MPF). The cyclin subunit imparts substrate specificity to the complex.

In terms of biological role, essential for the control of the cell cycle at the G2/M (mitosis) transition. This Oryzias javanicus (Javanese ricefish) protein is G2/mitotic-specific cyclin-B1 (ccnb1).